The primary structure comprises 345 residues: UPF0284 protein STK_21430 (345 aa).

It belongs to the UPF0284 family.

In Sulfurisphaera tokodaii (strain DSM 16993 / JCM 10545 / NBRC 100140 / 7) (Sulfolobus tokodaii), this protein is UPF0284 protein STK_21430.